Here is a 342-residue protein sequence, read N- to C-terminus: Phosphate acyltransferase (342 aa).

This sequence belongs to the PlsX family. Homodimer. Probably interacts with PlsY.

The protein localises to the cytoplasm. It catalyses the reaction a fatty acyl-[ACP] + phosphate = an acyl phosphate + holo-[ACP]. It functions in the pathway lipid metabolism; phospholipid metabolism. In terms of biological role, catalyzes the reversible formation of acyl-phosphate (acyl-PO(4)) from acyl-[acyl-carrier-protein] (acyl-ACP). This enzyme utilizes acyl-ACP as fatty acyl donor, but not acyl-CoA. In Shewanella halifaxensis (strain HAW-EB4), this protein is Phosphate acyltransferase.